The chain runs to 228 residues: ATP synthase subunit beta, mitochondrial (228 aa).

Residues 1-31 constitute a mitochondrion transit peptide; sequence MFALRAAAKADKNLLPFLGQLSRSHAAKAAK. 183–190 lines the ATP pocket; that stretch reads GGAGVGKT.

It belongs to the ATPase alpha/beta chains family. F-type ATPases have 2 components, CF(1) - the catalytic core - and CF(0) - the membrane proton channel. CF(1) has five subunits: alpha(3), beta(3), gamma(1), delta(1), epsilon(1). CF(0) has three main subunits: a, b and c.

It localises to the mitochondrion. Its subcellular location is the mitochondrion inner membrane. It carries out the reaction ATP + H2O + 4 H(+)(in) = ADP + phosphate + 5 H(+)(out). Its function is as follows. Mitochondrial membrane ATP synthase (F(1)F(0) ATP synthase or Complex V) produces ATP from ADP in the presence of a proton gradient across the membrane which is generated by electron transport complexes of the respiratory chain. F-type ATPases consist of two structural domains, F(1) - containing the extramembraneous catalytic core, and F(0) - containing the membrane proton channel, linked together by a central stalk and a peripheral stalk. During catalysis, ATP synthesis in the catalytic domain of F(1) is coupled via a rotary mechanism of the central stalk subunits to proton translocation. Subunits alpha and beta form the catalytic core in F(1). Rotation of the central stalk against the surrounding alpha(3)beta(3) subunits leads to hydrolysis of ATP in three separate catalytic sites on the beta subunits. The chain is ATP synthase subunit beta, mitochondrial from Drosophila virilis (Fruit fly).